A 177-amino-acid polypeptide reads, in one-letter code: Large ribosomal subunit protein uL6 (177 aa).

It belongs to the universal ribosomal protein uL6 family. As to quaternary structure, part of the 50S ribosomal subunit.

This protein binds to the 23S rRNA, and is important in its secondary structure. It is located near the subunit interface in the base of the L7/L12 stalk, and near the tRNA binding site of the peptidyltransferase center. The polypeptide is Large ribosomal subunit protein uL6 (Methylorubrum extorquens (strain CM4 / NCIMB 13688) (Methylobacterium extorquens)).